The sequence spans 369 residues: Probable L-tyrosine/L-aspartate decarboxylase (369 aa).

The residue at position 224 (Lys-224) is an N6-(pyridoxal phosphate)lysine.

Belongs to the group II decarboxylase family. MfnA subfamily. Pyridoxal 5'-phosphate serves as cofactor.

The catalysed reaction is L-tyrosine + H(+) = tyramine + CO2. The enzyme catalyses L-aspartate + H(+) = beta-alanine + CO2. It functions in the pathway cofactor biosynthesis; methanofuran biosynthesis. Its pathway is cofactor biosynthesis; coenzyme A biosynthesis. In terms of biological role, catalyzes the decarboxylation of L-tyrosine to produce tyramine for methanofuran biosynthesis. Can also catalyze the decarboxylation of L-aspartate to produce beta-alanine for coenzyme A (CoA) biosynthesis. The sequence is that of Probable L-tyrosine/L-aspartate decarboxylase from Methanospirillum hungatei JF-1 (strain ATCC 27890 / DSM 864 / NBRC 100397 / JF-1).